The following is a 316-amino-acid chain: N-acetyl-gamma-glutamyl-phosphate reductase (316 aa).

Cysteine 136 is a catalytic residue.

This sequence belongs to the NAGSA dehydrogenase family. Type 1 subfamily.

The protein resides in the cytoplasm. The catalysed reaction is N-acetyl-L-glutamate 5-semialdehyde + phosphate + NADP(+) = N-acetyl-L-glutamyl 5-phosphate + NADPH + H(+). The protein operates within amino-acid biosynthesis; L-arginine biosynthesis; N(2)-acetyl-L-ornithine from L-glutamate: step 3/4. Catalyzes the NADPH-dependent reduction of N-acetyl-5-glutamyl phosphate to yield N-acetyl-L-glutamate 5-semialdehyde. This chain is N-acetyl-gamma-glutamyl-phosphate reductase, found in Xanthomonas euvesicatoria pv. vesicatoria (strain 85-10) (Xanthomonas campestris pv. vesicatoria).